Consider the following 38-residue polypeptide: Large ribosomal subunit protein bL36 (38 aa).

Belongs to the bacterial ribosomal protein bL36 family.

This is Large ribosomal subunit protein bL36 from Stutzerimonas stutzeri (strain A1501) (Pseudomonas stutzeri).